A 783-amino-acid chain; its full sequence is uncharacterized protein (783 aa).

The zn(2)-C6 fungal-type DNA-binding region spans 40 to 66 (CFNCKARKVRCDGANPCKACASNNLEC).

The protein resides in the cytoplasm. Its subcellular location is the nucleus. This is an uncharacterized protein from Schizosaccharomyces pombe (strain 972 / ATCC 24843) (Fission yeast).